Reading from the N-terminus, the 555-residue chain is Formate--tetrahydrofolate ligase (555 aa).

65–72 (TPAGEGKS) provides a ligand contact to ATP.

This sequence belongs to the formate--tetrahydrofolate ligase family.

The enzyme catalyses (6S)-5,6,7,8-tetrahydrofolate + formate + ATP = (6R)-10-formyltetrahydrofolate + ADP + phosphate. It participates in one-carbon metabolism; tetrahydrofolate interconversion. This chain is Formate--tetrahydrofolate ligase, found in Staphylococcus carnosus (strain TM300).